A 131-amino-acid chain; its full sequence is Fumarate reductase subunit C (131 aa).

Helical transmembrane passes span 30–50 (EGTCLPQLWFSLVVLFGVFAL), 58–78 (AGFVGFLSNPILMLINIVTLI), and 109–129 (IVRGLWGLTIVVTVVILAVAL).

Belongs to the FrdC family. Part of an enzyme complex containing four subunits: a flavoprotein (FrdA), an iron-sulfur protein (FrdB), and two hydrophobic anchor proteins (FrdC and FrdD).

The protein resides in the cell inner membrane. In terms of biological role, two distinct, membrane-bound, FAD-containing enzymes are responsible for the catalysis of fumarate and succinate interconversion; fumarate reductase is used in anaerobic growth, and succinate dehydrogenase is used in aerobic growth. Anchors the catalytic components of the fumarate reductase complex to the cell inner membrane, binds quinones. The sequence is that of Fumarate reductase subunit C from Proteus vulgaris.